The sequence spans 612 residues: Dihydroxy-acid dehydratase (612 aa).

Residue aspartate 81 participates in Mg(2+) binding. Cysteine 122 is a binding site for [2Fe-2S] cluster. Residues aspartate 123 and lysine 124 each coordinate Mg(2+). Lysine 124 is subject to N6-carboxylysine. Cysteine 195 contacts [2Fe-2S] cluster. A Mg(2+)-binding site is contributed by glutamate 491. Serine 517 serves as the catalytic Proton acceptor.

Belongs to the IlvD/Edd family. In terms of assembly, homodimer. Requires [2Fe-2S] cluster as cofactor. Mg(2+) serves as cofactor.

It catalyses the reaction (2R)-2,3-dihydroxy-3-methylbutanoate = 3-methyl-2-oxobutanoate + H2O. It carries out the reaction (2R,3R)-2,3-dihydroxy-3-methylpentanoate = (S)-3-methyl-2-oxopentanoate + H2O. It participates in amino-acid biosynthesis; L-isoleucine biosynthesis; L-isoleucine from 2-oxobutanoate: step 3/4. Its pathway is amino-acid biosynthesis; L-valine biosynthesis; L-valine from pyruvate: step 3/4. Functions in the biosynthesis of branched-chain amino acids. Catalyzes the dehydration of (2R,3R)-2,3-dihydroxy-3-methylpentanoate (2,3-dihydroxy-3-methylvalerate) into 2-oxo-3-methylpentanoate (2-oxo-3-methylvalerate) and of (2R)-2,3-dihydroxy-3-methylbutanoate (2,3-dihydroxyisovalerate) into 2-oxo-3-methylbutanoate (2-oxoisovalerate), the penultimate precursor to L-isoleucine and L-valine, respectively. This is Dihydroxy-acid dehydratase from Haemophilus influenzae (strain PittGG).